Here is a 248-residue protein sequence, read N- to C-terminus: tRNA uridine(34) hydroxylase (248 aa).

The region spanning 124–218 (TKQDVIVVDT…YLEDTQNKNN (95 aa)) is the Rhodanese domain. Catalysis depends on Cys178, which acts as the Cysteine persulfide intermediate.

The protein belongs to the TrhO family.

The catalysed reaction is uridine(34) in tRNA + AH2 + O2 = 5-hydroxyuridine(34) in tRNA + A + H2O. In terms of biological role, catalyzes oxygen-dependent 5-hydroxyuridine (ho5U) modification at position 34 in tRNAs. This is tRNA uridine(34) hydroxylase from Rickettsia bellii (strain OSU 85-389).